The chain runs to 620 residues: Glutathione-regulated potassium-efflux system protein KefC (620 aa).

12 helical membrane passes run 4-24 (HTLI…PIAV), 26-46 (LGLG…PWGL), 54-74 (SILH…GLEL), 90-110 (GALQ…LLGL), 114-134 (VAEL…MQAM), 149-169 (FAVL…IPLL), 178-198 (MGAF…VVLL), 218-238 (VFSA…EEVG), 270-290 (GLLL…GTLL), 294-314 (LRIV…LWLI), 327-347 (WFAV…GAAQ), and 359-379 (SLTL…VILN). An RCK N-terminal domain is found at 399-518 (QPRVIIAGFG…AGVEKPERET (120 aa)). A disordered region spans residues 597-620 (GWQGTEEGKHTGNMADEPETKPSS).

This sequence belongs to the monovalent cation:proton antiporter 2 (CPA2) transporter (TC 2.A.37) family. KefC subfamily. As to quaternary structure, homodimer. Interacts with the regulatory subunit KefF.

It localises to the cell inner membrane. Functionally, pore-forming subunit of a potassium efflux system that confers protection against electrophiles. Catalyzes K(+)/H(+) antiport. The sequence is that of Glutathione-regulated potassium-efflux system protein KefC from Escherichia coli O7:K1 (strain IAI39 / ExPEC).